Reading from the N-terminus, the 626-residue chain is Lipoprotein LpqB (626 aa).

The first 23 residues, 1 to 23 (MIGQANRIAAAVSTACLAVLLAG), serve as a signal peptide directing secretion. The N-palmitoyl cysteine moiety is linked to residue cysteine 24. Cysteine 24 is lipidated: S-diacylglycerol cysteine. The segment at 428–457 (EAEREEDLADDTEPGDTAVGSTERRETDRG) is disordered. The segment covering 430–441 (EREEDLADDTEP) has biased composition (acidic residues).

The protein belongs to the LpqB lipoprotein family.

The protein resides in the cell membrane. This chain is Lipoprotein LpqB, found in Thermobifida fusca (strain YX).